The chain runs to 160 residues: Glucan endo-1,3-beta-glucosidase, acidic isoform PR-O (160 aa).

E81 functions as the Nucleophile in the catalytic mechanism.

The protein belongs to the glycosyl hydrolase 17 family. In terms of processing, the N-terminus is blocked.

Its subcellular location is the secreted. It is found in the extracellular space. It catalyses the reaction Hydrolysis of (1-&gt;3)-beta-D-glucosidic linkages in (1-&gt;3)-beta-D-glucans.. Functionally, implicated in the defense of plants against pathogens. The sequence is that of Glucan endo-1,3-beta-glucosidase, acidic isoform PR-O (PR0) from Nicotiana tabacum (Common tobacco).